A 253-amino-acid chain; its full sequence is UPF0758 protein Bxeno_A3578 (253 aa).

Residues 131-253 form the MPN domain; sequence LINSPEAVEN…VYSFARAGWP (123 aa). 3 residues coordinate Zn(2+): His-202, His-204, and Asp-215. The short motif at 202–215 is the JAMM motif element; it reads HNHPSGAVQPSASD.

The protein belongs to the UPF0758 family.

The polypeptide is UPF0758 protein Bxeno_A3578 (Paraburkholderia xenovorans (strain LB400)).